Consider the following 137-residue polypeptide: Nucleoside diphosphate kinase (137 aa).

Residues Lys-9, Phe-57, Arg-85, Thr-91, Arg-102, and Asn-112 each coordinate ATP. Catalysis depends on His-115, which acts as the Pros-phosphohistidine intermediate.

Belongs to the NDK family. Homotetramer. Mg(2+) serves as cofactor.

The protein resides in the cytoplasm. The enzyme catalyses a 2'-deoxyribonucleoside 5'-diphosphate + ATP = a 2'-deoxyribonucleoside 5'-triphosphate + ADP. It carries out the reaction a ribonucleoside 5'-diphosphate + ATP = a ribonucleoside 5'-triphosphate + ADP. Functionally, major role in the synthesis of nucleoside triphosphates other than ATP. The ATP gamma phosphate is transferred to the NDP beta phosphate via a ping-pong mechanism, using a phosphorylated active-site intermediate. The protein is Nucleoside diphosphate kinase of Desulfotalea psychrophila (strain LSv54 / DSM 12343).